We begin with the raw amino-acid sequence, 687 residues long: Dictomallein (687 aa).

Disordered regions lie at residues methionine 1 to leucine 45 and threonine 73 to alanine 112. The 269-residue stretch at proline 233–alanine 501 folds into the Peptidase M66 domain. Position 393 (histidine 393) interacts with Zn(2+). Residue glutamate 394 is part of the active site. 2 residues coordinate Zn(2+): histidine 397 and histidine 403.

This sequence belongs to the dictomallein family. Zn(2+) is required as a cofactor.

The polypeptide is Dictomallein (dtmL) (Burkholderia pseudomallei (strain 1710b)).